We begin with the raw amino-acid sequence, 65 residues long: Large ribosomal subunit protein bL35 (65 aa).

This sequence belongs to the bacterial ribosomal protein bL35 family.

The sequence is that of Large ribosomal subunit protein bL35 from Psychrobacter sp. (strain PRwf-1).